A 1499-amino-acid chain; its full sequence is Phospholipid-transporting ATPase VA (1499 aa).

A disordered region spans residues 1-53 (MEREPAGTEEPGPPGRRRRREGRTRTVRSNLLPPPGAEDPAAGAAKGERRRRR). At 1-86 (MEREPAGTEE…KNLFEQFHRP (86 aa)) the chain is on the cytoplasmic side. Residues 15 to 26 (GRRRRREGRTRT) show a composition bias toward basic residues. A helical transmembrane segment spans residues 87-106 (ANVYFVFIALLNFVPAVNAF). Residues 107–110 (QPGL) lie on the Exoplasmic loop side of the membrane. A helical membrane pass occupies residues 111–128 (ALAPVLFILAITAFRDLW). Residues 129–309 (EDYSRHRSDH…SKLERQMNCD (181 aa)) lie on the Cytoplasmic side of the membrane. Residues 310–332 (VLWCVLLLVCMSLFSAVGHGLWI) form a helical membrane-spanning segment. The Exoplasmic loop portion of the chain corresponds to 333–362 (WRYQEKKSLFYVPKSDGSSLSPVTAAVYSF). Residues 363-384 (LTMIIVLQVLIPISLYVSIEIV) form a helical membrane-spanning segment. The Cytoplasmic segment spans residues 385 to 1087 (KACQVYFINQ…GHWCYSRLAN (703 aa)). Residue D427 is the 4-aspartylphosphate intermediate of the active site. D427, K428, and T429 together coordinate ATP. D427 provides a ligand contact to Mg(2+). T429 contributes to the Mg(2+) binding site. The tract at residues 464–531 (ADSEEEEVVP…AFSSPMEKDI (68 aa)) is disordered. A Phosphoserine modification is found at S466. Residues 477-499 (SVSQRGSIGSHQSVRVVHRTQST) are compositionally biased toward polar residues. ATP is bound by residues E700, F742, K766, R809, T889, G890, D891, R1005, and K1011. D1031 serves as a coordination point for Mg(2+). ATP is bound by residues N1034 and D1035. D1035 contacts Mg(2+). A helical transmembrane segment spans residues 1088 to 1108 (MVLYFFYKNTMFVGLLFWFQF). The Exoplasmic loop portion of the chain corresponds to 1109–1119 (FCGFSASTMID). Residues 1120-1140 (QWYLIFFNLLFSSLPPLVTGV) form a helical membrane-spanning segment. Residues 1141–1170 (LDRDVPANVLLTNPQLYKSGQNMEEYRPRT) are Cytoplasmic-facing. The chain crosses the membrane as a helical span at residues 1171 to 1192 (FWFNMADAAFQSLVCFSIPYLA). Residues 1193 to 1199 (YYDSNVD) lie on the Exoplasmic loop side of the membrane. Residues 1200–1222 (LFTWGTPIVTIALLTFLLHLGIE) form a helical membrane-spanning segment. The Cytoplasmic portion of the chain corresponds to 1223–1228 (TKTWTW). Residues 1229–1249 (LNWITCGFSVLLFFTVALIYN) form a helical membrane-spanning segment. Over 1250–1267 (ASCATCYPPSNPYWTMQA) the chain is Exoplasmic loop. Residues 1268 to 1292 (LLGDPVFYLTCLMTPVAALLPRLFF) traverse the membrane as a helical segment. Residues 1293-1499 (RSLQGRVFPT…LIGASSRRSQ (207 aa)) are Cytoplasmic-facing. 2 disordered regions span residues 1311 to 1356 (TRKS…PSWH) and 1464 to 1499 (DGQAGRGLPVQPHSGRSGLQGPDHRLLIGASSRRSQ). The span at 1330-1340 (LPKDSGTEHSS) shows a compositional bias: basic and acidic residues. Residues 1341–1356 (GRTVKTSVPLSQPSWH) show a composition bias toward polar residues.

It belongs to the cation transport ATPase (P-type) (TC 3.A.3) family. Type IV subfamily. Component of a P4-ATPase flippase complex which consists of a catalytic alpha subunit ATP10A and an accessory beta subunit TMEM30A. The cofactor is Mg(2+). Autophosphorylated at the conserved aspartate of the P-type ATPase signature sequence. Widely expressed, with highest levels in kidney, followed by lung, brain, prostate, testis, ovary and small intestine.

The protein localises to the cell membrane. It is found in the endoplasmic reticulum membrane. The enzyme catalyses ATP + H2O + phospholipidSide 1 = ADP + phosphate + phospholipidSide 2.. The catalysed reaction is a 1,2-diacyl-sn-glycero-3-phosphocholine(out) + ATP + H2O = a 1,2-diacyl-sn-glycero-3-phosphocholine(in) + ADP + phosphate + H(+). It catalyses the reaction a beta-D-glucosyl-(1&lt;-&gt;1')-N-acylsphing-4-enine(out) + ATP + H2O = a beta-D-glucosyl-(1&lt;-&gt;1')-N-acylsphing-4-enine(in) + ADP + phosphate + H(+). Inhibited under hypotonic conditions. Functionally, catalytic component of P4-ATPase flippase complex, which catalyzes the hydrolysis of ATP coupled to the transport of phosphatidylcholine (PC) from the outer to the inner leaflet of the plasma membrane. Initiates inward plasma membrane bending and recruitment of Bin/amphiphysin/Rvs (BAR) domain-containing proteins involved in membrane tubulation and cell trafficking. Facilitates ITGB1/beta1 integrin endocytosis, delaying cell adhesion and cell spreading on extracellular matrix. Has low flippase activity toward glucosylceramide (GlcCer). This is Phospholipid-transporting ATPase VA from Homo sapiens (Human).